We begin with the raw amino-acid sequence, 328 residues long: Alanine racemase (328 aa).

The active-site Proton acceptor; specific for D-alanine is Lys33. Lys33 is modified (N6-(pyridoxal phosphate)lysine). Arg118 contributes to the substrate binding site. The active-site Proton acceptor; specific for L-alanine is Tyr237. Met283 serves as a coordination point for substrate.

The protein belongs to the alanine racemase family. Pyridoxal 5'-phosphate serves as cofactor.

It catalyses the reaction L-alanine = D-alanine. It participates in amino-acid biosynthesis; D-alanine biosynthesis; D-alanine from L-alanine: step 1/1. Its function is as follows. Catalyzes the interconversion of L-alanine and D-alanine. May also act on other amino acids. This chain is Alanine racemase (alr), found in Campylobacter jejuni subsp. jejuni serotype O:2 (strain ATCC 700819 / NCTC 11168).